We begin with the raw amino-acid sequence, 231 residues long: Ribose-5-phosphate isomerase A (231 aa).

Residues 40 to 43 (TGST), 93 to 96 (DGAD), and 106 to 109 (KGGG) contribute to the substrate site. The Proton acceptor role is filled by Glu115. Lys133 contributes to the substrate binding site.

The protein belongs to the ribose 5-phosphate isomerase family. As to quaternary structure, homodimer.

The enzyme catalyses aldehydo-D-ribose 5-phosphate = D-ribulose 5-phosphate. The protein operates within carbohydrate degradation; pentose phosphate pathway; D-ribose 5-phosphate from D-ribulose 5-phosphate (non-oxidative stage): step 1/1. Functionally, catalyzes the reversible conversion of ribose-5-phosphate to ribulose 5-phosphate. In Escherichia coli O6:K15:H31 (strain 536 / UPEC), this protein is Ribose-5-phosphate isomerase A.